Here is a 382-residue protein sequence, read N- to C-terminus: S-adenosylmethionine synthase (382 aa).

ATP is bound at residue His16. Asp18 serves as a coordination point for Mg(2+). Glu44 is a binding site for K(+). Positions 57 and 100 each coordinate L-methionine. Residues Gln100–Asn110 are flexible loop. ATP is bound by residues Asp165–Lys167, Arg231–Phe232, Asp240, Arg246–Lys247, and Lys267. L-methionine is bound at residue Asp240. Lys271 provides a ligand contact to L-methionine.

The protein belongs to the AdoMet synthase family. Homotetramer; dimer of dimers. The cofactor is Mg(2+). K(+) serves as cofactor.

The protein resides in the cytoplasm. The enzyme catalyses L-methionine + ATP + H2O = S-adenosyl-L-methionine + phosphate + diphosphate. The protein operates within amino-acid biosynthesis; S-adenosyl-L-methionine biosynthesis; S-adenosyl-L-methionine from L-methionine: step 1/1. Functionally, catalyzes the formation of S-adenosylmethionine (AdoMet) from methionine and ATP. The overall synthetic reaction is composed of two sequential steps, AdoMet formation and the subsequent tripolyphosphate hydrolysis which occurs prior to release of AdoMet from the enzyme. This Legionella pneumophila subsp. pneumophila (strain Philadelphia 1 / ATCC 33152 / DSM 7513) protein is S-adenosylmethionine synthase.